Here is a 220-residue protein sequence, read N- to C-terminus: Glycerol-3-phosphate acyltransferase (220 aa).

Helical transmembrane passes span 11 to 31, 70 to 90, 96 to 116, 127 to 147, 153 to 173, and 193 to 213; these read INVI…GYAL, LLVL…SKLF, LQWM…FLNF, GSVV…WFFV, ISSL…FFVP, and MVLI…NLLA.

Belongs to the PlsY family. Probably interacts with PlsX.

The protein resides in the cell inner membrane. The catalysed reaction is an acyl phosphate + sn-glycerol 3-phosphate = a 1-acyl-sn-glycero-3-phosphate + phosphate. Its pathway is lipid metabolism; phospholipid metabolism. Functionally, catalyzes the transfer of an acyl group from acyl-phosphate (acyl-PO(4)) to glycerol-3-phosphate (G3P) to form lysophosphatidic acid (LPA). This enzyme utilizes acyl-phosphate as fatty acyl donor, but not acyl-CoA or acyl-ACP. This Helicobacter pylori (strain HPAG1) protein is Glycerol-3-phosphate acyltransferase.